The chain runs to 61 residues: MKRPSTQRAPATVNKGGNSMMKFYSEDAIGLKVGPTAVLFMSLIFIAFVIILHIMGKYTRS.

Residues 1–35 are Cytoplasmic-facing; that stretch reads MKRPSTQRAPATVNKGGNSMMKFYSEDAIGLKVGP. A helical membrane pass occupies residues 36–56; sequence TAVLFMSLIFIAFVIILHIMG. Residues 57–61 lie on the Extracellular side of the membrane; sequence KYTRS.

The protein belongs to the SEC61-beta family. As to quaternary structure, the SEC61 channel-forming translocon complex.

It is found in the endoplasmic reticulum membrane. Its function is as follows. Component of SEC61 channel-forming translocon complex that mediates transport of signal peptide-containing precursor polypeptides across the endoplasmic reticulum (ER). Forms a ribosome receptor and a gated pore in the ER membrane, both functions required for cotranslational translocation of nascent polypeptides. In Dictyostelium discoideum (Social amoeba), this protein is Protein transport protein Sec61 subunit beta (sec61b).